A 140-amino-acid chain; its full sequence is Small ribosomal subunit protein uS8c (140 aa).

Belongs to the universal ribosomal protein uS8 family. Part of the 30S ribosomal subunit.

Its subcellular location is the plastid. It is found in the chloroplast. One of the primary rRNA binding proteins, it binds directly to 16S rRNA central domain where it helps coordinate assembly of the platform of the 30S subunit. The chain is Small ribosomal subunit protein uS8c (rps8) from Euglena gracilis.